Reading from the N-terminus, the 399-residue chain is Sphingosine-1-phosphate phosphatase 2 (399 aa).

A run of 4 helical transmembrane segments spans residues 88-108 (YLFQ…FLPF), 121-141 (LIII…VLKW), 160-180 (YGMP…LLIS), and 185-205 (YQYP…LVCL). Residues 136–144 (KDVLKWPRP) form a phosphatase sequence motif I region. Residues 163–166 (PSTH) are phosphatase sequence motif II. Histidine 166 (proton donor) is an active-site residue. The phosphatase sequence motif III stretch occupies residues 206–217 (SRLYTGMHTVLD). Histidine 213 acts as the Nucleophile in catalysis. 5 helical membrane-spanning segments follow: residues 219 to 239 (LGGV…WTFI), 247 to 267 (PLFP…YPVS), 280 to 300 (ILAA…FQLV), 318 to 338 (TYML…ILLV), and 371 to 391 (VPYK…FVPM).

Belongs to the type 2 lipid phosphate phosphatase family. As to expression, expressed strongly in kidney and heart, followed by brain, colon, small intestine and lung. Not detected in skeletal muscle, thymus, spleen, liver, placenta, and peripheral blood leukocytes.

It localises to the endoplasmic reticulum membrane. The catalysed reaction is sphinganine 1-phosphate + H2O = sphinganine + phosphate. It carries out the reaction sphing-4-enine 1-phosphate + H2O = sphing-4-enine + phosphate. It catalyses the reaction (4R)-hydroxysphinganine 1-phosphate + H2O = (4R)-hydroxysphinganine + phosphate. In terms of biological role, has specific phosphohydrolase activity towards sphingoid base 1-phosphates. Has high phosphohydrolase activity against dihydrosphingosine-1-phosphate and sphingosine-1-phosphate (S1P) in vitro. Sphingosine-1-phosphate phosphatase activity is needed for efficient recycling of sphingosine into the sphingolipid synthesis pathway. May play a role in attenuating intracellular sphingosine 1-phosphate (S1P) signaling. May play a role in pro-inflammatory signaling. Plays a role in the regulation of pancreatic islet beta-cell endoplasmic reticulum stress and proliferation. The polypeptide is Sphingosine-1-phosphate phosphatase 2 (Homo sapiens (Human)).